A 540-amino-acid polypeptide reads, in one-letter code: Glucose-6-phosphate isomerase (540 aa).

Catalysis depends on Glu-350, which acts as the Proton donor. Catalysis depends on residues His-381 and Lys-503.

The protein belongs to the GPI family.

The protein resides in the cytoplasm. It catalyses the reaction alpha-D-glucose 6-phosphate = beta-D-fructose 6-phosphate. It participates in carbohydrate biosynthesis; gluconeogenesis. It functions in the pathway carbohydrate degradation; glycolysis; D-glyceraldehyde 3-phosphate and glycerone phosphate from D-glucose: step 2/4. In terms of biological role, catalyzes the reversible isomerization of glucose-6-phosphate to fructose-6-phosphate. This is Glucose-6-phosphate isomerase from Paraburkholderia xenovorans (strain LB400).